Here is a 276-residue protein sequence, read N- to C-terminus: Large ribosomal subunit protein uL2 (276 aa).

Disordered regions lie at residues 35 to 55 and 222 to 276; these read APLHKKGGRNNQGRLTVRHQG and GSVM…RRKK. A compositionally biased stretch (basic residues) spans 258–276; sequence KTRKKNKHSDKYIVRRRKK.

Belongs to the universal ribosomal protein uL2 family. In terms of assembly, part of the 50S ribosomal subunit. Forms a bridge to the 30S subunit in the 70S ribosome.

Its function is as follows. One of the primary rRNA binding proteins. Required for association of the 30S and 50S subunits to form the 70S ribosome, for tRNA binding and peptide bond formation. It has been suggested to have peptidyltransferase activity; this is somewhat controversial. Makes several contacts with the 16S rRNA in the 70S ribosome. This Shouchella clausii (strain KSM-K16) (Alkalihalobacillus clausii) protein is Large ribosomal subunit protein uL2.